The primary structure comprises 346 residues: uncharacterized protein (346 aa).

Positions 322-346 are disordered; sequence GRDGGYRETTSPPTGRGRNVRGSHA.

This is an uncharacterized protein from Mycobacterium tuberculosis (strain CDC 1551 / Oshkosh).